Here is a 471-residue protein sequence, read N- to C-terminus: Trigger factor (471 aa).

The 80-residue stretch at 166–245 (DDFITIDINA…LTAVKVRELP (80 aa)) folds into the PPIase FKBP-type domain. A disordered region spans residues 442–471 (AAGVTGEDDDTEAEEERVTVSADDPGAARF). Acidic residues predominate over residues 447–456 (GEDDDTEAEE).

Belongs to the FKBP-type PPIase family. Tig subfamily.

It is found in the cytoplasm. It catalyses the reaction [protein]-peptidylproline (omega=180) = [protein]-peptidylproline (omega=0). In terms of biological role, involved in protein export. Acts as a chaperone by maintaining the newly synthesized protein in an open conformation. Functions as a peptidyl-prolyl cis-trans isomerase. This chain is Trigger factor, found in Renibacterium salmoninarum (strain ATCC 33209 / DSM 20767 / JCM 11484 / NBRC 15589 / NCIMB 2235).